Reading from the N-terminus, the 794-residue chain is Phosphoribosylformylglycinamidine synthase subunit PurL (794 aa).

His-47 is a catalytic residue. 2 residues coordinate ATP: Tyr-50 and Lys-89. Residue Glu-91 participates in Mg(2+) binding. Substrate contacts are provided by residues 92–95 (SHNH) and Arg-114. Catalysis depends on His-93, which acts as the Proton acceptor. Asp-115 lines the Mg(2+) pocket. A substrate-binding site is contributed by Gln-238. Asp-266 is a Mg(2+) binding site. 310–312 (ESQ) provides a ligand contact to substrate. ATP is bound by residues Asp-522 and Gly-559. Asn-560 provides a ligand contact to Mg(2+). Residue Ser-562 participates in substrate binding.

This sequence belongs to the FGAMS family. Monomer. Part of the FGAM synthase complex composed of 1 PurL, 1 PurQ and 2 PurS subunits.

Its subcellular location is the cytoplasm. The enzyme catalyses N(2)-formyl-N(1)-(5-phospho-beta-D-ribosyl)glycinamide + L-glutamine + ATP + H2O = 2-formamido-N(1)-(5-O-phospho-beta-D-ribosyl)acetamidine + L-glutamate + ADP + phosphate + H(+). The protein operates within purine metabolism; IMP biosynthesis via de novo pathway; 5-amino-1-(5-phospho-D-ribosyl)imidazole from N(2)-formyl-N(1)-(5-phospho-D-ribosyl)glycinamide: step 1/2. Functionally, part of the phosphoribosylformylglycinamidine synthase complex involved in the purines biosynthetic pathway. Catalyzes the ATP-dependent conversion of formylglycinamide ribonucleotide (FGAR) and glutamine to yield formylglycinamidine ribonucleotide (FGAM) and glutamate. The FGAM synthase complex is composed of three subunits. PurQ produces an ammonia molecule by converting glutamine to glutamate. PurL transfers the ammonia molecule to FGAR to form FGAM in an ATP-dependent manner. PurS interacts with PurQ and PurL and is thought to assist in the transfer of the ammonia molecule from PurQ to PurL. The chain is Phosphoribosylformylglycinamidine synthase subunit PurL from Prochlorococcus marinus (strain MIT 9313).